The sequence spans 535 residues: Alpha-1,3-mannosyl-glycoprotein 4-beta-N-acetylglucosaminyltransferase A (535 aa).

Residues 1 to 6 (MRLRNG) lie on the Cytoplasmic side of the membrane. Residues 7–27 (TVATVLAFITSFLTLSWYTTW) traverse the membrane as a helical; Signal-anchor for type II membrane protein segment. Over 28-535 (QNGKEKVIAY…NEIHIKKVTN (508 aa)) the chain is Lumenal. The stretch at 31–57 (KEKVIAYQREFLALKERLRIAEHRISQ) forms a coiled coil. 2 N-linked (GlcNAc...) asparagine glycosylation sites follow: Asn-77 and Asn-458. Residue Ser-474 is modified to Phosphoserine.

This sequence belongs to the glycosyltransferase 54 family. The cofactor is a divalent metal cation. N-glycosylated. Highly expressed in small intestine, kidney, lung and spleen. Weakly expressed in brain, heart and liver.

The protein resides in the golgi apparatus membrane. It is found in the secreted. The enzyme catalyses N(4)-{beta-D-GlcNAc-(1-&gt;2)-alpha-D-Man-(1-&gt;3)-[beta-D-GlcNAc-(1-&gt;2)-alpha-D-Man-(1-&gt;6)]-beta-D-Man-(1-&gt;4)-beta-D-GlcNAc-(1-&gt;4)-beta-D-GlcNAc}-L-asparaginyl-[protein] + UDP-N-acetyl-alpha-D-glucosamine = N(4)-{beta-D-GlcNAc-(1-&gt;2)-[beta-D-GlcNAc-(1-&gt;4)]-alpha-D-Man-(1-&gt;3)-[beta-D-GlcNAc-(1-&gt;2)-alpha-D-Man-(1-&gt;6)]-beta-D-Man-(1-&gt;4)-beta-D-GlcNAc-(1-&gt;4)-beta-D-GlcNAc}-L-asparaginyl-[protein] + UDP + H(+). The catalysed reaction is an N(4)-{beta-D-GlcNAc-(1-&gt;2)-alpha-D-Man-(1-&gt;3)-[alpha-D-Man-(1-&gt;6)]-beta-D-Man-(1-&gt;4)-beta-D-GlcNAc-(1-&gt;4)-beta-D-GlcNAc}-L-asparaginyl-[protein] + UDP-N-acetyl-alpha-D-glucosamine = an N(4)-{beta-D-GlcNAc-(1-&gt;2)-[beta-D-GlcNAc-(1-&gt;4)]-alpha-D-Man-(1-&gt;3)-[alpha-D-Man-(1-&gt;6)]-beta-D-Man-(1-&gt;4)-beta-D-GlcNAc-(1-&gt;4)-beta-D-GlcNAc}-L-asparaginyl-[protein] + UDP + H(+). It carries out the reaction an N(4)-{beta-D-GlcNAc-(1-&gt;2)-alpha-D-Man-(1-&gt;3)-[beta-D-GlcNAc-(1-&gt;2)-[beta-D-GlcNAc-(1-&gt;6)]-alpha-D-Man-(1-&gt;6)]-beta-D-Man-(1-&gt;4)-beta-D-GlcNAc-(1-&gt;4)-beta-D-GlcNAc}-L-asparaginyl-[protein] + UDP-N-acetyl-alpha-D-glucosamine = an N(4)-{beta-D-GlcNAc-(1-&gt;2)-[beta-D-GlcNAc-(1-&gt;4)]-alpha-D-Man-(1-&gt;3)-[beta-D-GlcNAc-(1-&gt;2)-[beta-D-GlcNAc-(1-&gt;6)]-alpha-D-Man-(1-&gt;6)]-beta-D-Man-(1-&gt;4)-beta-D-GlcNAc-(1-&gt;4)-beta-D-GlcNAc}-L-asparaginyl-[protein] + UDP + H(+). It catalyses the reaction an N(4)-{beta-D-GlcNAc-(1-&gt;2)-alpha-D-Man-(1-&gt;3)-[beta-D-GlcNAc-(1-&gt;2)-alpha-D-Man-(1-&gt;6)]-beta-D-Man-(1-&gt;4)-beta-D-GlcNAc-(1-&gt;4)-[alpha-L-Fuc-(1-&gt;6)]-beta-D-GlcNAc}-L-asparaginyl-[protein] + UDP-N-acetyl-alpha-D-glucosamine = N(4)-{beta-D-GlcNAc-(1-&gt;2)-[beta-D-GlcNAc-(1-&gt;4)]-alpha-D-Man-(1-&gt;3)-[beta-D-GlcNAc-(1-&gt;2)-alpha-D-Man-(1-&gt;6)]-beta-D-Man-(1-&gt;4)-beta-D-GlcNAc-(1-&gt;4)-[alpha-L-Fuc-(1-&gt;6)]-beta-D-GlcNAc}-asparaginyl-[protein] + UDP + H(+). The enzyme catalyses an N(4)-{beta-D-GlcNAc-(1-&gt;2)-alpha-D-Man-(1-&gt;3)-[beta-D-Gal-(1-&gt;4)-beta-D-GlcNAc-(1-&gt;2)-alpha-D-Man-(1-&gt;6)]-beta-D-Man-(1-&gt;4)-beta-D-GlcNAc-(1-&gt;4)-beta-D-GlcNAc}-L-asparaginyl-[protein] + UDP-N-acetyl-alpha-D-glucosamine = an N(4)-{beta-D-GlcNAc-(1-&gt;2)-[beta-D-GlcNAc-(1-&gt;4)]-alpha-D-Man-(1-&gt;3)-[beta-D-Gal-(1-&gt;4)-beta-D-GlcNAc-(1-&gt;2)-alpha-D-Man-(1-&gt;6)]-beta-D-Man-(1-&gt;4)-beta-D-GlcNAc-(1-&gt;4)-beta-D-GlcNAc}-L-asparaginyl-[protein] + UDP + H(+). The catalysed reaction is N(4)-{beta-D-GlcNAc-(1-&gt;2)-alpha-D-Man-(1-&gt;3)-[alpha-D-Man-(1-&gt;3)-{alpha-D-Man-(1-&gt;6)}-alpha-D-Man-(1-&gt;6)]-beta-D-Man-(1-&gt;4)-beta-D-GlcNAc-(1-&gt;4)-beta-D-GlcNAc}-asparaginyl-[protein] + UDP-N-acetyl-alpha-D-glucosamine = N(4)-{beta-D-GlcNAc-(1-&gt;2)-[beta-D-GlcNAc-(1-&gt;4)]-alpha-D-Man-(1-&gt;3)-[alpha-D-Man-(1-&gt;3)-{alpha-D-Man-(1-&gt;6)}-alpha-D-Man-(1-&gt;6)]-beta-D-Man-(1-&gt;4)-beta-D-GlcNAc-(1-&gt;4)-beta-D-GlcNAc}-asparaginyl-[protein] + UDP + H(+). It carries out the reaction N(4)-{beta-D-GlcNAc-(1-&gt;2)-alpha-D-Man-(1-&gt;3)-beta-D-Man-(1-&gt;4)-beta-D-GlcNAc-(1-&gt;4)-beta-D-GlcNAc}-asparaginyl-[protein] + UDP-N-acetyl-alpha-D-glucosamine = N(4)-{beta-D-GlcNAc-(1-&gt;2)-[beta-D-GlcNAc-(1-&gt;4)]-alpha-D-Man-(1-&gt;3)-beta-D-Man-(1-&gt;4)-beta-D-GlcNAc-(1-&gt;4)-beta-D-GlcNAc}-asparaginyl-[protein] + UDP + H(+). The protein operates within protein modification; protein glycosylation. Inhibited by UDP. Glycosyltransferase that catalyze the transfer of GlcNAc from UDP-GlcNAc to the GlcNAcbeta1-2Manalpha1-3 arm of the core structure of N-linked glycans through a beta1-4 linkage and participates in the production of tri- and tetra-antennary N-linked sugar chains. Involved in glucose transport by mediating SLC2A2/GLUT2 glycosylation, thereby controlling cell-surface expression of SLC2A2 in pancreatic beta cells. The sequence is that of Alpha-1,3-mannosyl-glycoprotein 4-beta-N-acetylglucosaminyltransferase A from Bos taurus (Bovine).